Consider the following 1779-residue polypeptide: Fibronectin type III domain-containing protein 1 (1779 aa).

The signal sequence occupies residues 1–29 (MAPEARASPRLLLRAALLLLAALLPVASS). 4 consecutive Fibronectin type-III domains span residues 33–126 (PVDH…KAPR), 103–203 (PNKP…AEED), 207–302 (VPED…TPES), and 307–402 (APEN…IPTT). Residues 400 to 413 (PTTSSTEASVQPNG) show a composition bias toward polar residues. Disordered regions lie at residues 400–442 (PTTS…MPPA), 459–1108 (NGVA…RNLD), 1120–1227 (EENT…KPNG), and 1330–1401 (PTTT…PPGT). The span at 423-437 (QQPSSSAPKVAASSQ) shows a compositional bias: low complexity. Positions 493-506 (NPRSSRLETLNQKQ) are enriched in polar residues. Residues 534–554 (SRKEGMDRRGPSLDPHPHPRV) are compositionally biased toward basic and acidic residues. Composition is skewed to polar residues over residues 557-570 (SASS…STDN) and 590-607 (SSGS…TSAP). Positions 629-640 (ASSSTSRQSHSS) are enriched in low complexity. Phosphoserine is present on S651. Over residues 676 to 694 (HASSSHTTSRTASSSHPSA) the composition is skewed to low complexity. At S699 the chain carries Phosphoserine. Over residues 707-720 (DSDRAAEDTIRRAE) the composition is skewed to basic and acidic residues. Composition is skewed to polar residues over residues 763–784 (PSVS…SLPA) and 861–875 (PLSS…STTD). Over residues 879 to 904 (PQTSPASTSRQPSPARPPASRSQPSP) the composition is skewed to low complexity. Polar residues-rich tracts occupy residues 957 to 971 (APQN…TYED) and 1003 to 1020 (VGSQ…SQAG). Low complexity predominate over residues 1085 to 1097 (LSTSVKKWPSSSS). Over residues 1098-1108 (PRDKYADRNLD) the composition is skewed to basic and acidic residues. Composition is skewed to polar residues over residues 1147-1159 (NPAT…NTHS) and 1166-1177 (RAPSSYSSTTPM). Residues 1330–1389 (PTTTMPPSTTTTTVPPTTTLPPTTTTTRRTTTTRRTTTTRRPTTTTRATRRTTTTTTTPE) are compositionally biased toward low complexity. Residues 1543–1637 (APRNITVVAM…PSVSFVTESD (95 aa)) enclose the Fibronectin type-III 5 domain. N1546 is a glycosylation site (N-linked (GlcNAc...) asparagine).

It is found in the secreted. Functionally, may be an activator of G protein signaling. In Rattus norvegicus (Rat), this protein is Fibronectin type III domain-containing protein 1 (Fndc1).